The following is a 232-amino-acid chain: Cell cycle response regulator CtrA (232 aa).

Positions 2 to 116 (RVLLIEDDSA…ELIARIHAIV (115 aa)) constitute a Response regulatory domain. Asp51 is subject to 4-aspartylphosphate. Residues 124 to 223 (QSVITTGDLV…VWGRGYVLRE (100 aa)) constitute a DNA-binding region (ompR/PhoB-type).

Forms an asymmetric heterotetramer with ChpT (2:2). There are at least two modes of interaction between ChpT and CtrA, only one of which is competent to catalyze His-Asp phosphoryl transfer. In terms of processing, is phosphorylated by ChpT-P on Asp-51.

Its subcellular location is the cytoplasm. Its function is as follows. Component of a regulatory phosphorelay system that controls B.abortus cell growth, division, and intracellular survival inside mammalian host cells. This signaling pathway is composed of CckA, ChpT, CtrA and CpdR. CtrA is a response regulator substrate of ChpT. When phosphorylated, directly regulates the expression of ccrM. Is also probably involved in the transcriptional regulation of rpoD, pleC, minC and ftsE genes. This chain is Cell cycle response regulator CtrA (ctrA), found in Brucella abortus (strain S19).